Reading from the N-terminus, the 360-residue chain is 3-isopropylmalate dehydrogenase (360 aa).

Residue 76–89 (GPKWDKLDMAIRPE) participates in NAD(+) binding. Substrate-binding residues include R96, R106, R134, and D224. The Mg(2+) site is built by D224, D248, and D252. 282–294 (GSAPDIAGQNMAN) is a binding site for NAD(+).

The protein belongs to the isocitrate and isopropylmalate dehydrogenases family. LeuB type 1 subfamily. In terms of assembly, homodimer. Requires Mg(2+) as cofactor. Mn(2+) serves as cofactor.

It is found in the cytoplasm. It catalyses the reaction (2R,3S)-3-isopropylmalate + NAD(+) = 4-methyl-2-oxopentanoate + CO2 + NADH. Its pathway is amino-acid biosynthesis; L-leucine biosynthesis; L-leucine from 3-methyl-2-oxobutanoate: step 3/4. Catalyzes the oxidation of 3-carboxy-2-hydroxy-4-methylpentanoate (3-isopropylmalate) to 3-carboxy-4-methyl-2-oxopentanoate. The product decarboxylates to 4-methyl-2 oxopentanoate. In Hahella chejuensis (strain KCTC 2396), this protein is 3-isopropylmalate dehydrogenase.